We begin with the raw amino-acid sequence, 377 residues long: Nitric oxide reductase FlRd-NAD(+) reductase (377 aa).

The protein belongs to the FAD-dependent oxidoreductase family. It depends on FAD as a cofactor.

The protein localises to the cytoplasm. The catalysed reaction is 2 reduced [nitric oxide reductase rubredoxin domain] + NAD(+) + H(+) = 2 oxidized [nitric oxide reductase rubredoxin domain] + NADH. It participates in nitrogen metabolism; nitric oxide reduction. Its function is as follows. One of at least two accessory proteins for anaerobic nitric oxide (NO) reductase. Reduces the rubredoxin moiety of NO reductase. The polypeptide is Nitric oxide reductase FlRd-NAD(+) reductase (Escherichia coli O127:H6 (strain E2348/69 / EPEC)).